A 929-amino-acid polypeptide reads, in one-letter code: Bifunctional glutamine synthetase adenylyltransferase/adenylyl-removing enzyme (929 aa).

The tract at residues 1–423 (MSTPIDSSRA…RHFEQIFAAR (423 aa)) is adenylyl removase. An adenylyl transferase region spans residues 433 to 929 (ARIRPEQSGD…FQLWEDIFGT (497 aa)).

It belongs to the GlnE family. Requires Mg(2+) as cofactor.

It carries out the reaction [glutamine synthetase]-O(4)-(5'-adenylyl)-L-tyrosine + phosphate = [glutamine synthetase]-L-tyrosine + ADP. The catalysed reaction is [glutamine synthetase]-L-tyrosine + ATP = [glutamine synthetase]-O(4)-(5'-adenylyl)-L-tyrosine + diphosphate. Functionally, involved in the regulation of glutamine synthetase GlnA, a key enzyme in the process to assimilate ammonia. When cellular nitrogen levels are high, the C-terminal adenylyl transferase (AT) inactivates GlnA by covalent transfer of an adenylyl group from ATP to specific tyrosine residue of GlnA, thus reducing its activity. Conversely, when nitrogen levels are low, the N-terminal adenylyl removase (AR) activates GlnA by removing the adenylyl group by phosphorolysis, increasing its activity. The regulatory region of GlnE binds the signal transduction protein PII (GlnB) which indicates the nitrogen status of the cell. This is Bifunctional glutamine synthetase adenylyltransferase/adenylyl-removing enzyme from Nitrosomonas europaea (strain ATCC 19718 / CIP 103999 / KCTC 2705 / NBRC 14298).